Here is a 602-residue protein sequence, read N- to C-terminus: Exopolysaccharide phosphotransferase SCO2594 (602 aa).

The interval 251–271 is disordered; the sequence is PRAGEDLDAGDGAAGGPRPGL.

This sequence belongs to the stealth family.

This is Exopolysaccharide phosphotransferase SCO2594 from Streptomyces coelicolor (strain ATCC BAA-471 / A3(2) / M145).